A 557-amino-acid chain; its full sequence is MPKRTDIKKILIIGSGPIVIGQAAEFDYSGTQACKALKQEGYEVILVNSNPATIMTDPEMADKTYIEPLTADILEEIIKKERPDALLPTLGGQTGLNLAVELYENGVLERYGVELIGANYEAIKKGEDRELFKETMESIGLKVPESAVVRSVEEGLKAVEKIGFPVILRPAFTLGGTGSSVAYNVEEFKEKLKVALETSPIHEVLLDKSLIGWKEIEFEVVRDKADNVIIVCAIENFDPMGVHTGDSITVAPTQTLTDKEYQMLRDAAIAVIRAIGVDTGGSNIQFALSPESGDFYVIEMNPRVSRSSALASKATGFPIAKVAAKLAVGYTLDELKNDITKFTPASFEPSIDYVVVKIPRFDFAKFPEADRTLTTMMKSVGEVMAIGRTFKEALLKAVRSLELDRYGLAFPKLTNVDKVELERNLINPNDQRLWYIAEAFRRGYSVDEVYELTKIDRWFLYNIEEIVKFEEVLRKEELTPEILRQAKEMGYSDWEIAKIKGITEEEVRKLRKEEGIVPTFKGVDTCAGEFVAYTPYYYSSYERPYYTVDGQEILDED.

A carboxyphosphate synthetic domain region spans residues 1–402 (MPKRTDIKKI…ALLKAVRSLE (402 aa)). ATP contacts are provided by arginine 129, arginine 169, glycine 175, glycine 176, lysine 208, leucine 210, glutamate 215, glycine 241, valine 242, histidine 243, glutamine 285, and glutamate 299. The ATP-grasp domain occupies 133–328 (KETMESIGLK…IAKVAAKLAV (196 aa)). Positions 285, 299, and 301 each coordinate Mg(2+). Mn(2+) is bound by residues glutamine 285, glutamate 299, and asparagine 301. Residues 403 to 553 (LDRYGLAFPK…PYYTVDGQEI (151 aa)) form an oligomerization domain region.

This sequence belongs to the CarB family. As to quaternary structure, composed of two chains; the small (or glutamine) chain promotes the hydrolysis of glutamine to ammonia, which is used by the large (or ammonia) chain to synthesize carbamoyl phosphate. Tetramer of heterodimers (alpha,beta)4. Mg(2+) is required as a cofactor. It depends on Mn(2+) as a cofactor.

It catalyses the reaction hydrogencarbonate + L-glutamine + 2 ATP + H2O = carbamoyl phosphate + L-glutamate + 2 ADP + phosphate + 2 H(+). The catalysed reaction is hydrogencarbonate + NH4(+) + 2 ATP = carbamoyl phosphate + 2 ADP + phosphate + 2 H(+). The protein operates within amino-acid biosynthesis; L-arginine biosynthesis; carbamoyl phosphate from bicarbonate: step 1/1. It participates in pyrimidine metabolism; UMP biosynthesis via de novo pathway; (S)-dihydroorotate from bicarbonate: step 1/3. Functionally, large subunit of the glutamine-dependent carbamoyl phosphate synthetase (CPSase). CPSase catalyzes the formation of carbamoyl phosphate from the ammonia moiety of glutamine, carbonate, and phosphate donated by ATP, constituting the first step of 2 biosynthetic pathways, one leading to arginine and/or urea and the other to pyrimidine nucleotides. The large subunit (synthetase) binds the substrates ammonia (free or transferred from glutamine from the small subunit), hydrogencarbonate and ATP and carries out an ATP-coupled ligase reaction, activating hydrogencarbonate by forming carboxy phosphate which reacts with ammonia to form carbamoyl phosphate. The sequence is that of Carbamoyl phosphate synthase large chain, N-terminal section (carB1) from Aquifex aeolicus (strain VF5).